Consider the following 261-residue polypeptide: Caveolae-associated protein 3 (261 aa).

Residues 1–84 (MRESALERGP…SNTLAQLLAK (84 aa)) form an interaction with CAVIN1 region. A leucine-zipper region spans residues 20–78 (VHAVTVVTLLEKLASMLETLRERQGGLARRQGGLAGSVRRIQSGLGALSRSHDTTSNTL). Serine 62 and serine 70 each carry phosphoserine. Lysine 128 participates in a covalent cross-link: Glycyl lysine isopeptide (Lys-Gly) (interchain with G-Cter in SUMO2). The tract at residues 135–203 (ASAFQKAPEP…SGRKGPAAPP (69 aa)) is interaction with CAV1. A disordered region spans residues 139 to 261 (QKAPEPLGPA…EALLQMESVA (123 aa)). A compositionally biased stretch (acidic residues) spans 158–170 (LEAEVGESSDEEP). A phosphoserine mark is found at serine 165, serine 166, and serine 173. Over residues 200–212 (AAPPPTPVKPPRL) the composition is skewed to pro residues. The span at 213–231 (GPGRSAEAQPEAQPALEPT) shows a compositional bias: low complexity.

The protein belongs to the CAVIN family. As to quaternary structure, component of the CAVIN complex composed of CAVIN1, CAVIN2, CAVIN3 and CAVIN4. Interacts with PRKCD and with phosphatidylserine. Phosphatidylserine may form a bridge between PKC and PKC-binding partners and stabilize the binding. Interacts with PER2. Interacts with CAVIN1. Interacts (via leucine-zipper domain) with CAV1 in a cholesterol-sensitive manner. Interacts with EPS15L1. Post-translationally, in vitro, phosphorylated by PRKCD. Skeletal muscle, liver, stomach, lung, kidney and heart (at protein level). Strongly expressed in mammary and epithelial cells.

Its subcellular location is the cytoplasm. The protein resides in the membrane. It localises to the caveola. The protein localises to the cytosol. Functionally, regulates the traffic and/or budding of caveolae. Plays a role in caveola formation in a tissue-specific manner. Required for the formation of caveolae in smooth muscle but not in the lung and heart endothelial cells. Regulates the equilibrium between cell surface-associated and cell surface-dissociated caveolae by promoting the rapid release of caveolae from the cell surface. Plays a role in the regulation of the circadian clock. Modulates the period length and phase of circadian gene expression and also regulates expression and interaction of the core clock components PER1/2 and CRY1/2. The chain is Caveolae-associated protein 3 from Homo sapiens (Human).